Consider the following 144-residue polypeptide: Hemoglobin subunit alpha-1 (144 aa).

Position 1 is an N-acetylserine (S1). In terms of domain architecture, Globin spans 1 to 144 (SLTAKDKSVV…VSAALADKYR (144 aa)). H61 contributes to the O2 binding site. H90 is a binding site for heme b.

Belongs to the globin family. Heterotetramer of two alpha chains and two beta chains. Red blood cells.

In terms of biological role, involved in oxygen transport from gills to the various peripheral tissues. This chain is Hemoglobin subunit alpha-1 (hba1), found in Oncorhynchus mykiss (Rainbow trout).